Here is a 314-residue protein sequence, read N- to C-terminus: Formate-nitrite transporter (314 aa).

At 1 to 47 (MQKSTSKYVIDPISIKTNCSSEESYIRCVEYGKGKAHYRNLILLAKA) the chain is on the cytoplasmic side. A helical transmembrane segment spans residues 48 to 68 (ILAGVFVGVCAHASGIAGGLF). Over 69-77 (YYHKLREYV) the chain is Extracellular. A helical membrane pass occupies residues 78 to 98 (GISMSAFVYGFTFPIAFLCII). Residues 99-128 (CTGSDLFTGNTLAVTTALLQKKLGLLCYMR) are Cytoplasmic-facing. A helical membrane pass occupies residues 129 to 149 (VMCISLVGNYIGAVAFAFFVS). Residues 150–185 (YGSGAFSINTDTSKNHIFQFLNDIAIKKVSHSFIEC) lie on the Extracellular side of the membrane. The helical transmembrane segment at 186–206 (ICLAIGCNIFVCLAVYFVLSI) threads the bilayer. Topologically, residues 207–211 (KDGSG) are cytoplasmic. A helical membrane pass occupies residues 212 to 232 (LVFSVFFAVYAFAIAGYEHII). The Extracellular portion of the chain corresponds to 233-260 (ANIYTLNLALMISNDISFTQVYFKNLLP). Residues 261 to 281 (TLIGNYIAGGLVLAFPLFFIY) traverse the membrane as a helical segment. Topologically, residues 282 to 314 (RSCYYDYDKMNDELNTVVLKTLSLELQNESNHI) are cytoplasmic.

The protein belongs to the FNT transporter (TC 1.A.16) family. Homopentamer.

Its subcellular location is the cell membrane. The protein localises to the vacuole membrane. It carries out the reaction (S)-lactate(in) + H(+)(in) = (S)-lactate(out) + H(+)(out). It catalyses the reaction formate(in) + H(+)(in) = formate(out) + H(+)(out). The catalysed reaction is pyruvate(out) + H(+)(out) = pyruvate(in) + H(+)(in). The enzyme catalyses acetate(out) + H(+)(out) = acetate(in) + H(+)(in). Inhibited by the Malaria Box compound MMV007839 and its derivatives BH296 and BH267.meta. In terms of biological role, monocarboxylate-proton symporter that mediates the efflux of the waste product lactate in the intraerythrocytic parasites; active in acidic-to-neutral pH range. Transports L-lactate. This is Formate-nitrite transporter from Plasmodium malariae.